A 329-amino-acid chain; its full sequence is Diaminopimelate epimerase (329 aa).

Residues asparagine 14 and asparagine 73 each contribute to the substrate site. Cysteine 82 functions as the Proton donor in the catalytic mechanism. Substrate is bound by residues 83-84 (GN), asparagine 170, asparagine 206, and 224-225 (ER). Cysteine 233 serves as the catalytic Proton acceptor. Substrate is bound at residue 234-235 (GT).

This sequence belongs to the diaminopimelate epimerase family. In terms of assembly, homodimer.

It is found in the cytoplasm. The catalysed reaction is (2S,6S)-2,6-diaminopimelate = meso-2,6-diaminopimelate. It participates in amino-acid biosynthesis; L-lysine biosynthesis via DAP pathway; DL-2,6-diaminopimelate from LL-2,6-diaminopimelate: step 1/1. Its function is as follows. Catalyzes the stereoinversion of LL-2,6-diaminopimelate (L,L-DAP) to meso-diaminopimelate (meso-DAP), a precursor of L-lysine and an essential component of the bacterial peptidoglycan. This Listeria monocytogenes serotype 4b (strain CLIP80459) protein is Diaminopimelate epimerase.